Consider the following 206-residue polypeptide: Small ribosomal subunit protein uS4 (206 aa).

The S4 RNA-binding domain maps to 96 to 158; that stretch reads GRLDNVVYRM…AKKQSRIKAA (63 aa).

This sequence belongs to the universal ribosomal protein uS4 family. As to quaternary structure, part of the 30S ribosomal subunit. Contacts protein S5. The interaction surface between S4 and S5 is involved in control of translational fidelity.

One of the primary rRNA binding proteins, it binds directly to 16S rRNA where it nucleates assembly of the body of the 30S subunit. In terms of biological role, with S5 and S12 plays an important role in translational accuracy. The chain is Small ribosomal subunit protein uS4 from Vibrio cholerae serotype O1 (strain ATCC 39541 / Classical Ogawa 395 / O395).